A 435-amino-acid chain; its full sequence is U-box domain-containing protein 21 (435 aa).

Residues T30–P104 form the U-box domain. 4 ARM repeats span residues L202–S241, T245–L285, P288–E327, and E329–K369.

The enzyme catalyses S-ubiquitinyl-[E2 ubiquitin-conjugating enzyme]-L-cysteine + [acceptor protein]-L-lysine = [E2 ubiquitin-conjugating enzyme]-L-cysteine + N(6)-ubiquitinyl-[acceptor protein]-L-lysine.. Its pathway is protein modification; protein ubiquitination. Functions as an E3 ubiquitin ligase. In Arabidopsis thaliana (Mouse-ear cress), this protein is U-box domain-containing protein 21 (PUB21).